The following is a 92-amino-acid chain: MAKGQSLQDPFLNALRRERVPVSIYLVNGIKLQGQVESFDQFVILLKNTVSQMVYKHAISTVVPSRPFNVSNHQATNAQAGYNAQHDETDEK.

Residues 9–68 (DPFLNALRRERVPVSIYLVNGIKLQGQVESFDQFVILLKNTVSQMVYKHAISTVVPSRPF) form the Sm domain.

The protein belongs to the Hfq family. Homohexamer.

Its function is as follows. RNA chaperone that binds small regulatory RNA (sRNAs) and mRNAs to facilitate mRNA translational regulation in response to envelope stress, environmental stress and changes in metabolite concentrations. Also binds with high specificity to tRNAs. The chain is RNA-binding protein Hfq from Shewanella piezotolerans (strain WP3 / JCM 13877).